The sequence spans 298 residues: Tyrosine recombinase XerD (298 aa).

The Core-binding (CB) domain occupies 2–87; the sequence is KQELARIEQF…AVRRLFQYLY (86 aa). Positions 108–292 constitute a Tyr recombinase domain; it reads RLPKDLSEAQ…ATERLRQLHQ (185 aa). Residues arginine 148, lysine 172, histidine 244, arginine 247, and histidine 270 contribute to the active site. Tyrosine 279 acts as the O-(3'-phospho-DNA)-tyrosine intermediate in catalysis.

It belongs to the 'phage' integrase family. XerD subfamily. Forms a cyclic heterotetrameric complex composed of two molecules of XerC and two molecules of XerD, in which XerC interacts with XerD via its C-terminal region, XerD interacts with XerC via its C-terminal region and so on.

It is found in the cytoplasm. FtsK may regulate the catalytic switch between XerC and XerD in the heterotetrameric complex during the two steps of the recombination process. Site-specific tyrosine recombinase, which acts by catalyzing the cutting and rejoining of the recombining DNA molecules. Binds cooperatively to specific DNA consensus sequences that are separated from XerC binding sites by a short central region, forming the heterotetrameric XerC-XerD complex that recombines DNA substrates. The complex is essential to convert dimers of the bacterial chromosome into monomers to permit their segregation at cell division. It also contributes to the segregational stability of plasmids. In the complex XerD specifically exchanges the bottom DNA strands. The sequence is that of Tyrosine recombinase XerD from Shigella flexneri.